Reading from the N-terminus, the 75-residue chain is UPF0291 protein Teth39_0326 (75 aa).

Belongs to the UPF0291 family.

It is found in the cytoplasm. The chain is UPF0291 protein Teth39_0326 from Thermoanaerobacter pseudethanolicus (strain ATCC 33223 / 39E) (Clostridium thermohydrosulfuricum).